A 264-amino-acid chain; its full sequence is Thymidylate synthase (264 aa).

R21 contributes to the dUMP binding site. H51 serves as a coordination point for (6R)-5,10-methylene-5,6,7,8-tetrahydrofolate. 126-127 lines the dUMP pocket; that stretch reads RR. Catalysis depends on C146, which acts as the Nucleophile. DUMP-binding positions include 166 to 169, N177, and 207 to 209; these read RSAD and HIY. A (6R)-5,10-methylene-5,6,7,8-tetrahydrofolate-binding site is contributed by D169. Position 263 (A263) interacts with (6R)-5,10-methylene-5,6,7,8-tetrahydrofolate.

The protein belongs to the thymidylate synthase family. Bacterial-type ThyA subfamily. In terms of assembly, homodimer.

It is found in the cytoplasm. It carries out the reaction dUMP + (6R)-5,10-methylene-5,6,7,8-tetrahydrofolate = 7,8-dihydrofolate + dTMP. It participates in pyrimidine metabolism; dTTP biosynthesis. In terms of biological role, catalyzes the reductive methylation of 2'-deoxyuridine-5'-monophosphate (dUMP) to 2'-deoxythymidine-5'-monophosphate (dTMP) while utilizing 5,10-methylenetetrahydrofolate (mTHF) as the methyl donor and reductant in the reaction, yielding dihydrofolate (DHF) as a by-product. This enzymatic reaction provides an intracellular de novo source of dTMP, an essential precursor for DNA biosynthesis. The polypeptide is Thymidylate synthase (Cupriavidus metallidurans (strain ATCC 43123 / DSM 2839 / NBRC 102507 / CH34) (Ralstonia metallidurans)).